A 313-amino-acid polypeptide reads, in one-letter code: Ribonuclease Z (313 aa).

Residues histidine 63, histidine 65, aspartate 67, histidine 68, histidine 142, aspartate 212, and histidine 270 each coordinate Zn(2+). Catalysis depends on aspartate 67, which acts as the Proton acceptor.

Belongs to the RNase Z family. Homodimer. Requires Zn(2+) as cofactor.

It carries out the reaction Endonucleolytic cleavage of RNA, removing extra 3' nucleotides from tRNA precursor, generating 3' termini of tRNAs. A 3'-hydroxy group is left at the tRNA terminus and a 5'-phosphoryl group is left at the trailer molecule.. In terms of biological role, zinc phosphodiesterase, which displays some tRNA 3'-processing endonuclease activity. Probably involved in tRNA maturation, by removing a 3'-trailer from precursor tRNA. The sequence is that of Ribonuclease Z from Enterococcus faecalis (strain ATCC 700802 / V583).